The following is a 298-amino-acid chain: MACIENVLGGHAPSPLVVSVDKNGNQELHHDMPLQCLSSKPEDDAEPWGQPQVPLRPSVNVLTDLDSKQLEWPSERTGSCIPLHSLRAHRHPYGPPPAVAEESLATAEVNSSDALAGWRQEGQDAINVSWEVSGGPPALIVGGTKVNNGGTERGSNNARLHVALPQGKGFFPPRGPQVRGPSHIPTLRSGIVMEVPPGNTRIACRGKLAHVSFPLRGPCHPMHNWPRPIPLSSSTPGLPSCSTVHCFIPPRPPIFNPFLTMPLPFAPPPIFGPPLPSYFAHFHSGGMPAPASPNREHS.

The tract at residues 36–56 is disordered; that stretch reads CLSSKPEDDAEPWGQPQVPLR.

This is Proline-rich protein 32 (PRR32) from Homo sapiens (Human).